Consider the following 351-residue polypeptide: Polycomb group RING finger protein 6 (351 aa).

The disordered stretch occupies residues Met1–Ala114. A compositionally biased stretch (basic and acidic residues) spans Thr9–Arg19. Residues Leu24–Ile37 show a composition bias toward pro residues. At Ser32 the chain carries Phosphoserine. Residues Pro38 to Ala51 show a composition bias toward low complexity. Residues Arg62–Glu80 are compositionally biased toward basic and acidic residues. Residues Glu69–Glu110 adopt a coiled-coil conformation. A compositionally biased stretch (acidic residues) spans Asp81–Glu101. The residue at position 116 (Ser116) is a Phosphoserine. The segment at Cys135–Asn174 adopts an RING-type zinc-finger fold. Glycyl lysine isopeptide (Lys-Gly) (interchain with G-Cter in SUMO2) cross-links involve residues Lys224 and Lys235.

As to quaternary structure, component of a PRC1-like complex. Interacts with BMI1/PCGF4, RING1 and RNF2. Interacts with KDM5D. Interacts with CBX4, CBX6, CBX7 and CBX8. Phosphorylated during mitosis.

It is found in the nucleus. Functionally, transcriptional repressor. May modulate the levels of histone H3K4Me3 by activating KDM5D histone demethylase. Component of a Polycomb group (PcG) multiprotein PRC1-like complex, a complex class required to maintain the transcriptionally repressive state of many genes, including Hox genes, throughout development. PcG PRC1 complex acts via chromatin remodeling and modification of histones; it mediates monoubiquitination of histone H2A 'Lys-119', rendering chromatin heritably changed in its expressibility. Within the PRC1-like complex, regulates RNF2 ubiquitin ligase activity. This Rattus norvegicus (Rat) protein is Polycomb group RING finger protein 6 (Pcgf6).